Here is a 186-residue protein sequence, read N- to C-terminus: Protein C (186 aa).

Residues 1–12 show a composition bias toward polar residues; sequence MSKTDWNASGPS. Residues 1-43 form a disordered region; that stretch reads MSKTDWNASGPSRPSPSAHWPSGKLWQHGQKYQTTQDRSRPPA.

This sequence belongs to the morbillivirus protein C family. In terms of assembly, interacts with the phosphoprotein (via C-terminus); this interaction allows C to associate with the ribonucleocapsid.

It is found in the host nucleus. The protein resides in the host cytoplasmic vesicle. In terms of biological role, ribonucleocapsid-associated protein that interacts with the phosphoprotein (P), thereby increasing replication accuracy and processivity of the polymerase complex. This chain is Protein C (P/V/C), found in Homo sapiens (Human).